Consider the following 458-residue polypeptide: tRNA modification GTPase MnmE (458 aa).

Positions 22, 84, and 123 each coordinate (6S)-5-formyl-5,6,7,8-tetrahydrofolate. Residues 220-379 (GISTAIIGRP…LEKAIADLFF (160 aa)) form the TrmE-type G domain. A K(+)-binding site is contributed by Asn-230. GTP is bound by residues 230-235 (NVGKSS), 249-255 (TDIAGTT), and 274-277 (DTAG). Mg(2+) is bound at residue Ser-234. K(+) is bound by residues Thr-249, Ile-251, and Thr-254. A Mg(2+)-binding site is contributed by Thr-255. Lys-458 is a binding site for (6S)-5-formyl-5,6,7,8-tetrahydrofolate.

Belongs to the TRAFAC class TrmE-Era-EngA-EngB-Septin-like GTPase superfamily. TrmE GTPase family. In terms of assembly, homodimer. Heterotetramer of two MnmE and two MnmG subunits. Requires K(+) as cofactor.

It is found in the cytoplasm. Its function is as follows. Exhibits a very high intrinsic GTPase hydrolysis rate. Involved in the addition of a carboxymethylaminomethyl (cmnm) group at the wobble position (U34) of certain tRNAs, forming tRNA-cmnm(5)s(2)U34. The sequence is that of tRNA modification GTPase MnmE from Bacillus mycoides (strain KBAB4) (Bacillus weihenstephanensis).